Here is a 246-residue protein sequence, read N- to C-terminus: Sensory transduction protein LytT (246 aa).

Residues 4–120 (HIMIAEDERL…RFKIAMNRIR (117 aa)) enclose the Response regulatory domain. A 4-aspartylphosphate modification is found at Asp-55. In terms of domain architecture, HTH LytTR-type spans 136–243 (LVVNLDEKMM…AKGLFDALQG (108 aa)).

Phosphorylated by LytS.

It localises to the cytoplasm. In terms of biological role, member of the two-component regulatory system LytS/LytT that probably regulates genes involved in cell wall metabolism. The protein is Sensory transduction protein LytT (lytT) of Oceanobacillus iheyensis (strain DSM 14371 / CIP 107618 / JCM 11309 / KCTC 3954 / HTE831).